The chain runs to 251 residues: 3-deoxy-manno-octulosonate cytidylyltransferase (251 aa).

Belongs to the KdsB family.

The protein localises to the cytoplasm. The catalysed reaction is 3-deoxy-alpha-D-manno-oct-2-ulosonate + CTP = CMP-3-deoxy-beta-D-manno-octulosonate + diphosphate. It functions in the pathway nucleotide-sugar biosynthesis; CMP-3-deoxy-D-manno-octulosonate biosynthesis; CMP-3-deoxy-D-manno-octulosonate from 3-deoxy-D-manno-octulosonate and CTP: step 1/1. The protein operates within bacterial outer membrane biogenesis; lipopolysaccharide biosynthesis. Functionally, activates KDO (a required 8-carbon sugar) for incorporation into bacterial lipopolysaccharide in Gram-negative bacteria. The sequence is that of 3-deoxy-manno-octulosonate cytidylyltransferase from Vibrio parahaemolyticus serotype O3:K6 (strain RIMD 2210633).